The following is a 245-amino-acid chain: Tetrahydromethanopterin S-methyltransferase subunit A 1 (245 aa).

Topologically, residues 1 to 222 (MADKKPAADN…AGNYSGKVQG (222 aa)) are cytoplasmic. A 5-hydroxybenzimidazolylcob(I)amide-binding site is contributed by H84. A helical transmembrane segment spans residues 223–243 (IMIGLIFTLVIGFLLLMAPLL). The Extracellular portion of the chain corresponds to 244-245 (GA).

It belongs to the MtrA family. The complex is composed of 8 subunits; MtrA, MtrB, MtrC, MtrD, MtrE, MtrF, MtrG and MtrH. It depends on 5-hydroxybenzimidazolylcob(I)amide as a cofactor.

It is found in the cell membrane. The catalysed reaction is 5-methyl-5,6,7,8-tetrahydromethanopterin + coenzyme M + 2 Na(+)(in) = 5,6,7,8-tetrahydromethanopterin + methyl-coenzyme M + 2 Na(+)(out). Its pathway is one-carbon metabolism; methanogenesis from CO(2); methyl-coenzyme M from 5,10-methylene-5,6,7,8-tetrahydromethanopterin: step 2/2. In terms of biological role, part of a complex that catalyzes the formation of methyl-coenzyme M and tetrahydromethanopterin from coenzyme M and methyl-tetrahydromethanopterin. This is an energy-conserving, sodium-ion translocating step. The sequence is that of Tetrahydromethanopterin S-methyltransferase subunit A 1 from Methanobrevibacter ruminantium (strain ATCC 35063 / DSM 1093 / JCM 13430 / OCM 146 / M1) (Methanobacterium ruminantium).